The primary structure comprises 1132 residues: SNF2 domain-containing protein CLASSY 4 (1132 aa).

Disordered stretches follow at residues 24–104, 224–331, 376–396, and 525–544; these read NKSK…SKSF, LRGE…HHKK, DPVV…PRER, and PSVN…LPNR. The Nuclear localization signal signature appears at 47–54; sequence KRRVNMRD. Residues 81–90 show a composition bias toward basic and acidic residues; the sequence is EYPEGKRDDE. Over residues 92–103 the composition is skewed to polar residues; that stretch reads VGSTSGNLQSKS. The segment covering 233–242 has biased composition (low complexity); sequence SDEVVSLSSS. Over residues 243–254 the composition is skewed to acidic residues; the sequence is SDDEEDPLEELG. Positions 255 to 269 are enriched in basic and acidic residues; that stretch reads TDSREEVSGEDRDSG. Acidic residues-rich tracts occupy residues 270–282 and 291–309; these read ESDM…DSDS and DSSD…EDEE. 3 stretches are compositionally biased toward basic and acidic residues: residues 310-326, 376-392, and 525-539; these read GGTR…SEKV, DPVV…EHGK, and PSVN…RKGD. Residues 603–796 form the Helicase ATP-binding domain; it reads SVGVKGSGGC…SNVLCLARPA (194 aa). 616–623 contributes to the ATP binding site; sequence HKAGTGKT. The short motif at 747–750 is the DEAH box element; the sequence is DEGH. The Helicase C-terminal domain occupies 934 to 1087; that stretch reads DFIRISGTVK…ELVFSSTNEK (154 aa).

Belongs to the SNF2/RAD54 helicase family. As to quaternary structure, interacts with NRPD1.

It localises to the nucleus. In terms of biological role, probable chromatin remodeling factor. In Arabidopsis thaliana (Mouse-ear cress), this protein is SNF2 domain-containing protein CLASSY 4 (CLSY4).